We begin with the raw amino-acid sequence, 98 residues long: MNKISPLGSNWNEFEQQIFNEEEIRESNLRVALIKELITSRQQLGISQKQLETLSGVKQPMIARIEKGQTNPQLETLLKLLAPLGKTLSIVPLRVKNA.

One can recognise an HTH cro/C1-type domain in the interval 37-91 (LITSRQQLGISQKQLETLSGVKQPMIARIEKGQTNPQLETLLKLLAPLGKTLSIV). The H-T-H motif DNA-binding region spans 48-67 (QKQLETLSGVKQPMIARIEK).

This is an uncharacterized protein from Haemophilus influenzae (strain ATCC 51907 / DSM 11121 / KW20 / Rd).